Consider the following 185-residue polypeptide: Ribosome-recycling factor (185 aa).

This sequence belongs to the RRF family.

It is found in the cytoplasm. Functionally, responsible for the release of ribosomes from messenger RNA at the termination of protein biosynthesis. May increase the efficiency of translation by recycling ribosomes from one round of translation to another. This is Ribosome-recycling factor from Aeromonas hydrophila subsp. hydrophila (strain ATCC 7966 / DSM 30187 / BCRC 13018 / CCUG 14551 / JCM 1027 / KCTC 2358 / NCIMB 9240 / NCTC 8049).